A 509-amino-acid chain; its full sequence is uncharacterized protein (509 aa).

Disordered stretches follow at residues 112-131, 152-325, 365-457, and 488-509; these read KSKQNNNGFNGHKGNFSENE, NKNT…NNDS, NNIN…PNQG, and AQQPVSQQNNNVETNQDNVQQQ. Low complexity-rich tracts occupy residues 116 to 127 and 153 to 184; these read NNNGFNGHKGNF and KNTIITRKNNNNNNSNNNNNNNNNYNQKSNTT. The segment covering 189-217 has biased composition (acidic residues); sequence YSDDDYQNEQNEFEEEDYDSNDDENDSHD. Residues 228-242 show a composition bias toward polar residues; the sequence is KTTNQLKRKVSSSFT. Composition is skewed to low complexity over residues 243–325 and 365–397; these read NNNY…NNDS and NNINANNNNNNNNNNNNNNNLNDSTPNNQTNND. The span at 398–422 shows a compositional bias: polar residues; that stretch reads LKSSNHSNYDFNYNTNERLSHSPIQ. The span at 423 to 442 shows a compositional bias: low complexity; it reads THSSSNNSTPSNQSPTFPSN. 2 stretches are compositionally biased toward polar residues: residues 443-457 and 496-509; these read YISQNANINYNPNQG and NNNVETNQDNVQQQ.

This is an uncharacterized protein from Dictyostelium discoideum (Social amoeba).